The chain runs to 153 residues: MTSLGLVMENSQVLPAFLLCSTLLVIKMYAVAVITGQVRLRKKAFANPEDALKRGGLQYCRSDPDVERCLRAHRNDMETIYPFLFLGFVYSFLGPNPLIAWIHFLVVLTGRVVHTVAYLGKMNPRIRSGAYVLAQFACFSMALQILWEVAHHL.

Residues 1-13 lie on the Lumenal side of the membrane; the sequence is MTSLGLVMENSQV. The helical transmembrane segment at 14-42 threads the bilayer; that stretch reads LPAFLLCSTLLVIKMYAVAVITGQVRLRK. Position 39 (Arg-39) interacts with glutathione. The Cytoplasmic segment spans residues 43-61; sequence KAFANPEDALKRGGLQYCR. Residues 62–91 form a helical membrane-spanning segment; it reads SDPDVERCLRAHRNDMETIYPFLFLGFVYS. Residue 74–78 participates in glutathione binding; sequence RNDME. Topologically, residues 92–98 are lumenal; that stretch reads FLGPNPL. The chain crosses the membrane as a helical span at residues 99 to 120; that stretch reads IAWIHFLVVLTGRVVHTVAYLG. The glutathione site is built by His-114 and Tyr-118. Residues 121–124 lie on the Cytoplasmic side of the membrane; it reads KMNP. The chain crosses the membrane as a helical span at residues 125–153; sequence RIRSGAYVLAQFACFSMALQILWEVAHHL. 127–131 is a glutathione binding site; sequence RSGAY.

It belongs to the MAPEG family. Glutathione is required as a cofactor.

The protein localises to the membrane. It is found in the cytoplasm. Its subcellular location is the perinuclear region. The catalysed reaction is prostaglandin H2 = prostaglandin E2. The enzyme catalyses 2-glyceryl-prostaglandin H2 = 2-glyceryl-prostaglandin E2. It carries out the reaction prostaglandin G2 = (15S)-15-hydroperoxy-prostaglandin E2. It catalyses the reaction 1-chloro-2,4-dinitrobenzene + glutathione = 2,4-dinitrophenyl-S-glutathione + chloride + H(+). The catalysed reaction is (5S)-hydroperoxy-(6E,8Z,11Z,14Z)-eicosatetraenoate + 2 glutathione = (5S)-hydroxy-(6E,8Z,11Z,14Z)-eicosatetraenoate + glutathione disulfide + H2O. Its pathway is lipid metabolism; prostaglandin biosynthesis. Its activity is regulated as follows. Activity is increased following LPS stimulation and down-regulated by the anti-inflammatory glucocorticoid dexamethasone. Terminal enzyme of the cyclooxygenase (COX)-2-mediated prostaglandin E2 (PGE2) biosynthetic pathway. Catalyzes the glutathione-dependent oxidoreduction of prostaglandin endoperoxide H2 (PGH2) to prostaglandin E2 (PGE2) in response to inflammatory stimuli. Plays a key role in inflammation response, fever and pain. Also catalyzes the oxidoreduction of endocannabinoids into prostaglandin glycerol esters and PGG2 into 15-hydroperoxy-PGE2. In addition, displays low glutathione transferase and glutathione-dependent peroxidase activities, toward 1-chloro-2,4-dinitrobenzene and 5-hydroperoxyicosatetraenoic acid (5-HPETE), respectively. This Rattus norvegicus (Rat) protein is Prostaglandin E synthase (Ptges).